The sequence spans 211 residues: Large ribosomal subunit protein uL4 (211 aa).

The interval 63–94 (RFGRQKGGGTARHGARSAPQFVGGGKAHGPRV) is disordered.

It belongs to the universal ribosomal protein uL4 family. As to quaternary structure, part of the 50S ribosomal subunit.

In terms of biological role, one of the primary rRNA binding proteins, this protein initially binds near the 5'-end of the 23S rRNA. It is important during the early stages of 50S assembly. It makes multiple contacts with different domains of the 23S rRNA in the assembled 50S subunit and ribosome. Functionally, forms part of the polypeptide exit tunnel. This chain is Large ribosomal subunit protein uL4, found in Maricaulis maris (strain MCS10) (Caulobacter maris).